The primary structure comprises 197 residues: Dephospho-CoA kinase (197 aa).

The region spanning 2-197 (IIGLTGGIAS…GAIKDLANLV (196 aa)) is the DPCK domain. 10–15 (ASGKST) contributes to the ATP binding site.

The protein belongs to the CoaE family.

Its subcellular location is the cytoplasm. The catalysed reaction is 3'-dephospho-CoA + ATP = ADP + CoA + H(+). It participates in cofactor biosynthesis; coenzyme A biosynthesis; CoA from (R)-pantothenate: step 5/5. Catalyzes the phosphorylation of the 3'-hydroxyl group of dephosphocoenzyme A to form coenzyme A. The protein is Dephospho-CoA kinase of Streptococcus thermophilus (strain ATCC BAA-250 / LMG 18311).